Reading from the N-terminus, the 627-residue chain is Spindle assembly abnormal protein 6 homolog (627 aa).

Residues 39–91 enclose the PISA domain; it reads VHRKDLVVRLTDDTDLYFLYNLIISEEDFQSLKVQQGLLIDFTSFPQKFIDLL. Residues 153-473 are a coiled coil; sequence LASCLSSVKE…SREVLKTNEN (321 aa). Disordered stretches follow at residues 187 to 257 and 561 to 586; these read QTLS…LQTK and EVSPAAFSQPANKENSEPVGLDSKYF. Over residues 191–201 the composition is skewed to basic and acidic residues; the sequence is EKSRELDKLRS. A compositionally biased stretch (polar residues) spans 202–213; it reads EWTSQTTSLSSR. Residues 214–226 show a composition bias toward basic and acidic residues; sequence HMQDLTAEREKAL. Residues 229-238 show a composition bias toward low complexity; that stretch reads QSRLQQQNEQ.

As to quaternary structure, nine homodimers form a cartwheel structure with an internal diameter of 23 nM and radial spokes connecting to the microtubule triplets.

It is found in the cytoplasm. The protein resides in the cytoskeleton. Its subcellular location is the microtubule organizing center. It localises to the centrosome. In terms of biological role, central scaffolding component of the centrioles ensuring their 9-fold symmetry. Required for centrosome biogenesis and duplication: required both for mother-centriole-dependent centriole duplication and deuterosome-dependent centriole amplification in multiciliated cells. This Danio rerio (Zebrafish) protein is Spindle assembly abnormal protein 6 homolog (sass6).